We begin with the raw amino-acid sequence, 249 residues long: Diphthine synthase (249 aa).

S-adenosyl-L-methionine contacts are provided by residues aspartate 83, leucine 86, serine 111–isoleucine 112, leucine 163, and leucine 205.

Belongs to the diphthine synthase family. In terms of assembly, homodimer.

It catalyses the reaction 2-[(3S)-amino-3-carboxypropyl]-L-histidyl-[translation elongation factor 2] + 3 S-adenosyl-L-methionine = diphthine-[translation elongation factor 2] + 3 S-adenosyl-L-homocysteine + 3 H(+). It participates in protein modification; peptidyl-diphthamide biosynthesis. In terms of biological role, S-adenosyl-L-methionine-dependent methyltransferase that catalyzes the trimethylation of the amino group of the modified target histidine residue in translation elongation factor 2 (EF-2), to form an intermediate called diphthine. The three successive methylation reactions represent the second step of diphthamide biosynthesis. The protein is Diphthine synthase of Pyrobaculum islandicum (strain DSM 4184 / JCM 9189 / GEO3).